The chain runs to 104 residues: Thioredoxin (104 aa).

In terms of domain architecture, Thioredoxin spans alanine 2–leucine 104. An intrachain disulfide couples cysteine 29 to cysteine 32.

Belongs to the thioredoxin family.

Its function is as follows. Component of the thioredoxin-thioredoxin reductase system. Participates in various redox reactions through the reversible oxidation of its active center dithiol to a disulfide and catalyzes dithiol-disulfide exchange reactions. This chain is Thioredoxin (trxA), found in Staphylococcus epidermidis (strain ATCC 35984 / DSM 28319 / BCRC 17069 / CCUG 31568 / BM 3577 / RP62A).